The primary structure comprises 475 residues: Luvungin A synthase CYP716AC1 (475 aa).

The helical transmembrane segment at 3-23 (FIILSLLLLSLALYSLYYVII) threads the bilayer. Residue Cys-423 participates in heme binding.

This sequence belongs to the cytochrome P450 family. It depends on heme as a cofactor. In terms of tissue distribution, expressed in flowers, maturing fruits and in juice vesicles.

It localises to the membrane. The enzyme catalyses (21S)-21-acetoxyl-apo-melianone + reduced [NADPH--hemoprotein reductase] + O2 = luvungin A + oxidized [NADPH--hemoprotein reductase] + H2O + H(+). It participates in secondary metabolite biosynthesis; terpenoid biosynthesis. Monooxygenase involved in the biosynthesis of limonoids triterpene natural products such as limonin, a compound with insecticidal activity responsible for the bitter taste in citrus. Catalyzes the conversion of (21S)-21-acetoxyl-apo-melianone to luvungin A. This is Luvungin A synthase CYP716AC1 from Citrus sinensis (Sweet orange).